A 228-amino-acid chain; its full sequence is Leucyl/phenylalanyl-tRNA--protein transferase (228 aa).

This sequence belongs to the L/F-transferase family.

The protein localises to the cytoplasm. The catalysed reaction is N-terminal L-lysyl-[protein] + L-leucyl-tRNA(Leu) = N-terminal L-leucyl-L-lysyl-[protein] + tRNA(Leu) + H(+). It carries out the reaction N-terminal L-arginyl-[protein] + L-leucyl-tRNA(Leu) = N-terminal L-leucyl-L-arginyl-[protein] + tRNA(Leu) + H(+). It catalyses the reaction L-phenylalanyl-tRNA(Phe) + an N-terminal L-alpha-aminoacyl-[protein] = an N-terminal L-phenylalanyl-L-alpha-aminoacyl-[protein] + tRNA(Phe). Functions in the N-end rule pathway of protein degradation where it conjugates Leu, Phe and, less efficiently, Met from aminoacyl-tRNAs to the N-termini of proteins containing an N-terminal arginine or lysine. This Thiobacillus denitrificans (strain ATCC 25259 / T1) protein is Leucyl/phenylalanyl-tRNA--protein transferase.